The sequence spans 412 residues: Imidazolonepropionase (412 aa).

His-76 and His-78 together coordinate Fe(3+). Residues His-76 and His-78 each contribute to the Zn(2+) site. Positions 85, 148, and 181 each coordinate 4-imidazolone-5-propanoate. Tyr-148 is a binding site for N-formimidoyl-L-glutamate. Fe(3+) is bound at residue His-242. His-242 contributes to the Zn(2+) binding site. Glu-245 serves as a coordination point for 4-imidazolone-5-propanoate. Asp-317 lines the Fe(3+) pocket. Asp-317 is a binding site for Zn(2+). Residues Asn-319 and Gly-321 each contribute to the N-formimidoyl-L-glutamate site. A 4-imidazolone-5-propanoate-binding site is contributed by Ser-322.

The protein belongs to the metallo-dependent hydrolases superfamily. HutI family. Zn(2+) serves as cofactor. Fe(3+) is required as a cofactor.

The protein localises to the cytoplasm. The catalysed reaction is 4-imidazolone-5-propanoate + H2O = N-formimidoyl-L-glutamate. It participates in amino-acid degradation; L-histidine degradation into L-glutamate; N-formimidoyl-L-glutamate from L-histidine: step 3/3. In terms of biological role, catalyzes the hydrolytic cleavage of the carbon-nitrogen bond in imidazolone-5-propanoate to yield N-formimidoyl-L-glutamate. It is the third step in the universal histidine degradation pathway. The polypeptide is Imidazolonepropionase (Staphylococcus aureus (strain MSSA476)).